Here is a 270-residue protein sequence, read N- to C-terminus: Cyclohexanol dehydrogenase (270 aa).

Residues Arg19, Asp40, Asp78, Val79, Asn105, Tyr176, Lys180, Ile209, and Thr211 each coordinate NAD(+). Tyr176 serves as the catalytic Proton acceptor.

This sequence belongs to the short-chain dehydrogenases/reductases (SDR) family. Homodimer.

It localises to the cytoplasm. The enzyme catalyses cyclohexanol + NAD(+) = cyclohexanone + NADH + H(+). Activity is enhanced by the addition of Ba(2+) and Mg(2+), but inhibited by the addition of Al(3+), Ca(2+), Co(2+), Cu(2+), Mn(2+) and Zn(2+). Its function is as follows. Catalyzes the oxidation of cyclohexanol to cyclohexanone. Can also use a broad range of other alcohols, including trans-cyclohexane-1,2-diol, trans-cyclopentane-1,2-diol, cyclopentanol, hexane-1,2-diol, ethanol, 1-propanol, 1-butanol, 1-pentanol and 1-hexanol. The polypeptide is Cyclohexanol dehydrogenase (Rhodococcus sp. (strain TK6)).